Reading from the N-terminus, the 307-residue chain is Glutaminase (307 aa).

Positions 66, 116, 160, 167, 191, 243, and 261 each coordinate substrate.

The protein belongs to the glutaminase family. Homotetramer.

It catalyses the reaction L-glutamine + H2O = L-glutamate + NH4(+). The polypeptide is Glutaminase (Saccharophagus degradans (strain 2-40 / ATCC 43961 / DSM 17024)).